The sequence spans 159 residues: Small ribosomal subunit protein uS9 (159 aa).

It belongs to the universal ribosomal protein uS9 family.

This is Small ribosomal subunit protein uS9 from Rickettsia africae (strain ESF-5).